Here is a 248-residue protein sequence, read N- to C-terminus: tRNA (guanine-N(1)-)-methyltransferase (248 aa).

Residues G113 and 133–138 each bind S-adenosyl-L-methionine; that span reads IGDYVL.

This sequence belongs to the RNA methyltransferase TrmD family. Homodimer.

The protein resides in the cytoplasm. It catalyses the reaction guanosine(37) in tRNA + S-adenosyl-L-methionine = N(1)-methylguanosine(37) in tRNA + S-adenosyl-L-homocysteine + H(+). Its function is as follows. Specifically methylates guanosine-37 in various tRNAs. The sequence is that of tRNA (guanine-N(1)-)-methyltransferase from Shewanella halifaxensis (strain HAW-EB4).